We begin with the raw amino-acid sequence, 868 residues long: Leucine--tRNA ligase (868 aa).

The short motif at 42–52 (PYPSGKLHMGH) is the 'HIGH' region element. The short motif at 627-631 (KMSKS) is the 'KMSKS' region element. An ATP-binding site is contributed by Lys-630.

This sequence belongs to the class-I aminoacyl-tRNA synthetase family.

It localises to the cytoplasm. It catalyses the reaction tRNA(Leu) + L-leucine + ATP = L-leucyl-tRNA(Leu) + AMP + diphosphate. This Pseudomonas entomophila (strain L48) protein is Leucine--tRNA ligase.